A 452-amino-acid chain; its full sequence is Bifunctional protein GlmU (452 aa).

The pyrophosphorylase stretch occupies residues 1–226 (MSLSVVILAA…ATEVEGVNTR (226 aa)). Residues 8–11 (LAAG), Lys22, Gln73, 78–79 (GT), 100–102 (YGD), Gly137, Glu151, Asn166, and Asn224 contribute to the UDP-N-acetyl-alpha-D-glucosamine site. Asp102 provides a ligand contact to Mg(2+). Asn224 serves as a coordination point for Mg(2+). Positions 227 to 247 (LQLANLERAYQLKKATELLLS) are linker. Positions 248–452 (GVMLRDPNRF…INNWKRPTKK (205 aa)) are N-acetyltransferase. 2 residues coordinate UDP-N-acetyl-alpha-D-glucosamine: Arg330 and Lys348. His360 serves as the catalytic Proton acceptor. The UDP-N-acetyl-alpha-D-glucosamine site is built by Tyr363 and Asn374. Acetyl-CoA is bound by residues Ala377, 383–384 (NY), Ser402, Ala420, and Arg437.

This sequence in the N-terminal section; belongs to the N-acetylglucosamine-1-phosphate uridyltransferase family. The protein in the C-terminal section; belongs to the transferase hexapeptide repeat family. In terms of assembly, homotrimer. It depends on Mg(2+) as a cofactor.

It is found in the cytoplasm. The catalysed reaction is alpha-D-glucosamine 1-phosphate + acetyl-CoA = N-acetyl-alpha-D-glucosamine 1-phosphate + CoA + H(+). It carries out the reaction N-acetyl-alpha-D-glucosamine 1-phosphate + UTP + H(+) = UDP-N-acetyl-alpha-D-glucosamine + diphosphate. It participates in nucleotide-sugar biosynthesis; UDP-N-acetyl-alpha-D-glucosamine biosynthesis; N-acetyl-alpha-D-glucosamine 1-phosphate from alpha-D-glucosamine 6-phosphate (route II): step 2/2. Its pathway is nucleotide-sugar biosynthesis; UDP-N-acetyl-alpha-D-glucosamine biosynthesis; UDP-N-acetyl-alpha-D-glucosamine from N-acetyl-alpha-D-glucosamine 1-phosphate: step 1/1. It functions in the pathway bacterial outer membrane biogenesis; LPS lipid A biosynthesis. Its function is as follows. Catalyzes the last two sequential reactions in the de novo biosynthetic pathway for UDP-N-acetylglucosamine (UDP-GlcNAc). The C-terminal domain catalyzes the transfer of acetyl group from acetyl coenzyme A to glucosamine-1-phosphate (GlcN-1-P) to produce N-acetylglucosamine-1-phosphate (GlcNAc-1-P), which is converted into UDP-GlcNAc by the transfer of uridine 5-monophosphate (from uridine 5-triphosphate), a reaction catalyzed by the N-terminal domain. This Psychromonas ingrahamii (strain DSM 17664 / CCUG 51855 / 37) protein is Bifunctional protein GlmU.